The primary structure comprises 1135 residues: Large proline-rich protein bag6-A (1135 aa).

The 76-residue stretch at 7 to 82 (MEVTVKTLDS…HLVERAPPQT (76 aa)) folds into the Ubiquitin-like domain. Disordered regions lie at residues 76–114 (ERAP…RNGN), 194–238 (EQAA…SPSE), 350–407 (TGNG…PHPR), 498–522 (SFQF…VPGA), 552–612 (QGGS…QHLS), 661–698 (PVST…ESLP), 1075–1099 (KATG…EAQG), and 1116–1135 (NESY…RGDP). A compositionally biased stretch (low complexity) spans 79–100 (PPQTQPSTGGPSTSSSTSPTSS). Positions 212–227 (RETLPQTTQNTDGQSN) are enriched in polar residues. Residues 228 to 237 (TTPTSHPSPS) show a composition bias toward low complexity. Residues 367–387 (QPPSTNTSEPQRPNTENQPPS) are compositionally biased toward polar residues. Low complexity-rich tracts occupy residues 555–600 (SSTS…SVPS) and 663–672 (STAPTQSASQ). The segment covering 673-692 (APPPSSPPPPPAHSSPPPAA) has biased composition (pro residues). Residues 1087–1099 (CVRRELDNSEAQG) show a composition bias toward basic and acidic residues. Residues 1116 to 1129 (NESYSAQRFPNTQR) are compositionally biased toward polar residues.

As to quaternary structure, component of the bag6/bat3 complex.

The protein localises to the cytoplasm. Its subcellular location is the cytosol. The protein resides in the nucleus. It localises to the secreted. It is found in the extracellular exosome. In terms of biological role, ATP-independent molecular chaperone preventing the aggregation of misfolded and hydrophobic patches-containing proteins. Functions as part of a cytosolic protein quality control complex, the bag6/bat3 complex, which maintains these client proteins in a soluble state and participates in their proper delivery to the endoplasmic reticulum or alternatively can promote their sorting to the proteasome where they undergo degradation. The bag6/bat3 complex is involved in the post-translational delivery of tail-anchored/type II transmembrane proteins to the endoplasmic reticulum membrane. Similarly, the bag6/bat3 complex also functions as a sorting platform for proteins of the secretory pathway that are mislocalized to the cytosol either delivering them to the proteasome for degradation or to the endoplasmic reticulum. The bag6/bat3 complex also plays a role in the endoplasmic reticulum-associated degradation (ERAD), a quality control mechanism that eliminates unwanted proteins of the endoplasmic reticulum through their retrotranslocation to the cytosol and their targeting to the proteasome. It maintains these retrotranslocated proteins in an unfolded yet soluble state condition in the cytosol to ensure their proper delivery to the proteasome. Also required for selective ubiquitin-mediated degradation of defective nascent chain polypeptides by the proteasome. Also involved in endoplasmic reticulum stress-induced pre-emptive quality control, a mechanism that selectively attenuates the translocation of newly synthesized proteins into the endoplasmic reticulum and reroutes them to the cytosol for proteasomal degradation. May ensure the proper degradation of these proteins and thereby protects the endoplasmic reticulum from protein overload upon stress. By stabilizing a large spectrum of proteins, may indirectly affect different biological processes including apoptosis. By controlling the steady-state expression of the IGF1R receptor, indirectly regulates the insulin-like growth factor receptor signaling pathway. Functionally, when nuclear, may also act as a component of some chromatin regulator complex. In Xenopus laevis (African clawed frog), this protein is Large proline-rich protein bag6-A.